The chain runs to 249 residues: Tumor necrosis factor ligand superfamily member 12 (249 aa).

The Cytoplasmic segment spans residues 1–21 (MAARRSQRRRGRRGEPGTALL). The chain crosses the membrane as a helical; Signal-anchor for type II membrane protein span at residues 22–45 (APLVLSLGLALACLGLLLVVVSLG). Topologically, residues 46 to 249 (SWATLSAQEP…LTYFGLFQVH (204 aa)) are extracellular. Residues 52 to 78 (AQEPSQEELTAEDRREPPELNPQTEES) form a disordered region. The region spanning 107–248 (IAAHYEVHPR…FLTYFGLFQV (142 aa)) is the THD domain. An N-linked (GlcNAc...) asparagine glycan is attached at asparagine 139. Cysteines 191 and 210 form a disulfide.

This sequence belongs to the tumor necrosis factor family. In terms of assembly, homotrimer. Interacts with the angiogenic factor AGGF1/VG5Q. The soluble form is produced from the membrane form by proteolytic processing. As to expression, widely expressed.

It is found in the cell membrane. Its subcellular location is the secreted. Its function is as follows. Binds to FN14 and possibly also to TNRFSF12/APO3. Weak inducer of apoptosis in some cell types. Mediates NF-kappa-B activation. Promotes angiogenesis and the proliferation of endothelial cells. Also involved in induction of inflammatory cytokines. Promotes IL8 secretion. This is Tumor necrosis factor ligand superfamily member 12 (Tnfsf12) from Mus musculus (Mouse).